A 364-amino-acid polypeptide reads, in one-letter code: Spermidine/putrescine import ATP-binding protein PotA (364 aa).

Positions 5-235 (LSFKGVTKGF…PVNRFVADFI (231 aa)) constitute an ABC transporter domain. An ATP-binding site is contributed by 37–44 (GPSGCGKT).

It belongs to the ABC transporter superfamily. Spermidine/putrescine importer (TC 3.A.1.11.1) family. The complex is composed of two ATP-binding proteins (PotA), two transmembrane proteins (PotB and PotC) and a solute-binding protein (PotD).

The protein resides in the cell membrane. The catalysed reaction is ATP + H2O + polyamine-[polyamine-binding protein]Side 1 = ADP + phosphate + polyamineSide 2 + [polyamine-binding protein]Side 1.. In terms of biological role, part of the ABC transporter complex PotABCD involved in spermidine/putrescine import. Responsible for energy coupling to the transport system. In Staphylococcus haemolyticus (strain JCSC1435), this protein is Spermidine/putrescine import ATP-binding protein PotA.